A 241-amino-acid polypeptide reads, in one-letter code: Pyrroloquinoline-quinone synthase (241 aa).

The protein belongs to the PqqC family.

The catalysed reaction is 6-(2-amino-2-carboxyethyl)-7,8-dioxo-1,2,3,4,7,8-hexahydroquinoline-2,4-dicarboxylate + 3 O2 = pyrroloquinoline quinone + 2 H2O2 + 2 H2O + H(+). Its pathway is cofactor biosynthesis; pyrroloquinoline quinone biosynthesis. Ring cyclization and eight-electron oxidation of 3a-(2-amino-2-carboxyethyl)-4,5-dioxo-4,5,6,7,8,9-hexahydroquinoline-7,9-dicarboxylic-acid to PQQ. This chain is Pyrroloquinoline-quinone synthase, found in Ruegeria pomeroyi (strain ATCC 700808 / DSM 15171 / DSS-3) (Silicibacter pomeroyi).